A 268-amino-acid chain; its full sequence is Ribosomal RNA small subunit methyltransferase A (268 aa).

S-adenosyl-L-methionine-binding residues include asparagine 10, isoleucine 12, glycine 37, glutamate 58, aspartate 83, and asparagine 107.

The protein belongs to the class I-like SAM-binding methyltransferase superfamily. rRNA adenine N(6)-methyltransferase family. RsmA subfamily.

The protein localises to the cytoplasm. The enzyme catalyses adenosine(1518)/adenosine(1519) in 16S rRNA + 4 S-adenosyl-L-methionine = N(6)-dimethyladenosine(1518)/N(6)-dimethyladenosine(1519) in 16S rRNA + 4 S-adenosyl-L-homocysteine + 4 H(+). Specifically dimethylates two adjacent adenosines (A1518 and A1519) in the loop of a conserved hairpin near the 3'-end of 16S rRNA in the 30S particle. May play a critical role in biogenesis of 30S subunits. This chain is Ribosomal RNA small subunit methyltransferase A, found in Caldanaerobacter subterraneus subsp. tengcongensis (strain DSM 15242 / JCM 11007 / NBRC 100824 / MB4) (Thermoanaerobacter tengcongensis).